The sequence spans 247 residues: (7aS)-7a-methyl-1,5-dioxo-2,3,5,6,7,7a-hexahydro-1H-indene-carboxyl-CoA hydrolase (247 aa).

This sequence belongs to the enoyl-CoA hydratase/isomerase family.

It carries out the reaction (7aS)-7a-methyl-1,5-dioxo-2,3,5,6,7,7a-hexahydro-1H-indene-carboxyl-CoA + H2O = (3E)-2-(2-carboxylatoethyl)-3-methyl-6-oxocyclohex-1-ene-1-carboxyl-CoA + H(+). It participates in steroid metabolism; cholesterol degradation. Its function is as follows. Involved in the final steps of cholesterol and steroid degradation. Catalyzes the hydrolytic ring D opening of (7aS)-7a-methyl-1,5-dioxo-2,3,5,6,7,7a-hexahydro-1H-indene-carboxyl-CoA (HIEC-CoA) to (3E)-2-(2-carboxylatoethyl)-3-methyl-6-oxocyclohex-1-ene-1-carboxyl-CoA (COCHEA-CoA). This Mycobacterium tuberculosis (strain ATCC 25618 / H37Rv) protein is (7aS)-7a-methyl-1,5-dioxo-2,3,5,6,7,7a-hexahydro-1H-indene-carboxyl-CoA hydrolase.